The sequence spans 300 residues: F-box associated domain-containing protein sdz-33 (300 aa).

The region spanning 5–51 is the F-box domain; sequence PFPILCLPDFVLQKSLKLMGVVEHLCLSILSKNIKQLIATLKGYPKC.

As to expression, expressed in D-type motor neuron cell bodies.

Its function is as follows. Substrate recognition component of E3 ubiquitin-protein ligase complex which mediates the ubiquitination and subsequent proteasomal degradation of target proteins such as mdl-1. Positively regulates axon regeneration by targeting mdl-1 for ubiquitin-mediated degradation; probably thereby reducing levels of mdl-1-mxl-1 heterodimers, allowing free mxl-1 to form complexes with tdpt-1 and thus inhibiting tdpt-1-dependent sumoylation of ets-4. In Caenorhabditis elegans, this protein is F-box associated domain-containing protein sdz-33.